We begin with the raw amino-acid sequence, 963 residues long: Spliceosome associated factor 3, U4/U6 recycling protein (963 aa).

Residues M1–E11 are compositionally biased toward low complexity. 2 disordered regions span residues M1 to R36 and T50 to E90. The residue at position 2 (A2) is an N-acetylalanine. The mediates interaction with PRPF3 stretch occupies residues A2 to S351. S10 and S16 each carry phosphoserine. Residues A14 to D23 show a composition bias toward basic and acidic residues. Positions K21–A46 form a coiled coil. Positions Q57–E69 are enriched in acidic residues. The stretch at E82–Y110 forms a coiled coil. HAT repeat units lie at residues G126–S158, L164–G195, G201–A237, A242–D275, G324–R356, K359–R391, V394–R430, and N487–A520. A Phosphoserine modification is found at S215. The required for interaction with USP4 stretch occupies residues N487–A520. Residues C537–N953 are necessary and sufficient for U6 snRNA binding. Positions L559–G619 form a coiled coil. Over residues L590–R601 the composition is skewed to basic and acidic residues. The tract at residues L590 to K694 is disordered. The interval Q600 to C670 is required for nuclear localization. Residues R601–K608 carry the Nuclear localization signal motif. Positions K602–I617 are enriched in basic residues. Positions D626–E639 are enriched in acidic residues. The residue at position 650 (S650) is a Phosphoserine. T657 bears the Phosphothreonine mark. Positions P677–K694 are enriched in basic and acidic residues. In terms of domain architecture, RRM 1 spans I704 to D782. Phosphoserine occurs at positions 769, 795, and 852. An RRM 2 domain is found at H801–P878. The tract at residues P878 to L898 is disordered. A compositionally biased stretch (basic and acidic residues) spans K882–K891. R906 carries the post-translational modification Omega-N-methylarginine. Residues L920–A948 form a disordered region. Positions A925–A948 are enriched in low complexity.

In terms of assembly, component of the 7SK snRNP complex at least composed of P-TEFb (composed of CDK9 and CCNT1/cyclin-T1), HEXIM1, HEXIM2, BCDIN3, SART3 proteins and 7SK and U6 snRNAs. Interacts with AGO1 and AGO2. Interacts with PRPF3 and USP4; the interaction with PRPF3 is direct and recruits USP4 to its substrate PRPF3. Interacts with USP15; the interaction is direct. Interacts with HIV-1 Tat. As to expression, ubiquitously expressed.

The protein localises to the nucleus. The protein resides in the nucleoplasm. Its subcellular location is the cajal body. It is found in the nucleus speckle. It localises to the cytoplasm. Functionally, U6 snRNP-binding protein that functions as a recycling factor of the splicing machinery. Promotes the initial reassembly of U4 and U6 snRNPs following their ejection from the spliceosome during its maturation. Also binds U6atac snRNPs and may function as a recycling factor for U4atac/U6atac spliceosomal snRNP, an initial step in the assembly of U12-type spliceosomal complex. The U12-type spliceosomal complex plays a role in the splicing of introns with non-canonical splice sites. May also function as a substrate-targeting factor for deubiquitinases like USP4 and USP15. Recruits USP4 to ubiquitinated PRPF3 within the U4/U5/U6 tri-snRNP complex, promoting PRPF3 deubiquitination and thereby regulating the spliceosome U4/U5/U6 tri-snRNP spliceosomal complex disassembly. May also recruit the deubiquitinase USP15 to histone H2B and mediate histone deubiquitination, thereby regulating gene expression and/or DNA repair. May play a role in hematopoiesis probably through transcription regulation of specific genes including MYC. Regulates Tat transactivation activity through direct interaction. May be a cellular factor for HIV-1 gene expression and viral replication. In Homo sapiens (Human), this protein is Spliceosome associated factor 3, U4/U6 recycling protein.